A 424-amino-acid chain; its full sequence is GTPase Obg (424 aa).

An Obg domain is found at 1 to 158 (MFVDRARIYI…LWVILELKLL (158 aa)). One can recognise an OBG-type G domain in the interval 159 to 330 (ADVGLIGFPN…LIYYAAQKLK (172 aa)). Residues 165–172 (GFPNVGKS), 190–194 (FTTIN), 212–215 (DIPG), 282–285 (NKMD), and 311–313 (SAA) contribute to the GTP site. S172 and T192 together coordinate Mg(2+). Residues 347–424 (YTAVEEEPFN…MYDLEFEYFR (78 aa)) enclose the OCT domain.

It belongs to the TRAFAC class OBG-HflX-like GTPase superfamily. OBG GTPase family. In terms of assembly, monomer. Mg(2+) serves as cofactor.

The protein resides in the cytoplasm. An essential GTPase which binds GTP, GDP and possibly (p)ppGpp with moderate affinity, with high nucleotide exchange rates and a fairly low GTP hydrolysis rate. Plays a role in control of the cell cycle, stress response, ribosome biogenesis and in those bacteria that undergo differentiation, in morphogenesis control. The chain is GTPase Obg from Acetivibrio thermocellus (strain ATCC 27405 / DSM 1237 / JCM 9322 / NBRC 103400 / NCIMB 10682 / NRRL B-4536 / VPI 7372) (Clostridium thermocellum).